The chain runs to 269 residues: Tryptophan synthase alpha chain (269 aa).

Residues glutamate 49 and aspartate 60 each act as proton acceptor in the active site.

The protein belongs to the TrpA family. In terms of assembly, tetramer of two alpha and two beta chains.

The enzyme catalyses (1S,2R)-1-C-(indol-3-yl)glycerol 3-phosphate + L-serine = D-glyceraldehyde 3-phosphate + L-tryptophan + H2O. Its pathway is amino-acid biosynthesis; L-tryptophan biosynthesis; L-tryptophan from chorismate: step 5/5. Functionally, the alpha subunit is responsible for the aldol cleavage of indoleglycerol phosphate to indole and glyceraldehyde 3-phosphate. In Pseudomonas putida (Arthrobacter siderocapsulatus), this protein is Tryptophan synthase alpha chain.